The chain runs to 251 residues: PF03932 family protein CutC (251 aa).

It belongs to the CutC family.

It is found in the cytoplasm. The sequence is that of PF03932 family protein CutC from Bacteroides fragilis (strain ATCC 25285 / DSM 2151 / CCUG 4856 / JCM 11019 / LMG 10263 / NCTC 9343 / Onslow / VPI 2553 / EN-2).